The primary structure comprises 99 residues: UPF0473 protein SMU_2077c (99 aa).

It belongs to the UPF0473 family.

The polypeptide is UPF0473 protein SMU_2077c (Streptococcus mutans serotype c (strain ATCC 700610 / UA159)).